The sequence spans 109 residues: Elicitor peptide 2 (109 aa).

The propeptide occupies 1-73; the sequence is MEKLDKRREE…KDDDVVVLLR (73 aa). Residues 74–88 are compositionally biased toward basic and acidic residues; the sequence is DNKAKSKKRDKEKPS. The segment at 74 to 109 is disordered; the sequence is DNKAKSKKRDKEKPSSGRPGQTNSVPNAAIQVYKED.

The protein belongs to the brassicaceae elicitor peptide family.

Elicitor of plant defense. This is Elicitor peptide 2 (PEP2) from Arabidopsis thaliana (Mouse-ear cress).